Reading from the N-terminus, the 592-residue chain is A-type ATP synthase subunit A (592 aa).

ATP is bound at residue 234–241 (GGFGTGKT).

It belongs to the ATPase alpha/beta chains family. Has multiple subunits with at least A(3), B(3), C, D, E, F, H, I and proteolipid K(x).

The protein localises to the cell membrane. The catalysed reaction is ATP + H2O + 4 H(+)(in) = ADP + phosphate + 5 H(+)(out). Functionally, component of the A-type ATP synthase that produces ATP from ADP in the presence of a proton gradient across the membrane. The A chain is the catalytic subunit. This Cenarchaeum symbiosum (strain A) protein is A-type ATP synthase subunit A.